A 379-amino-acid polypeptide reads, in one-letter code: Deoxyhypusine synthase (379 aa).

NAD(+) contacts are provided by residues 108 to 112, 134 to 136, glutamate 140, and aspartate 257; these read SNLIS and TAG. Residue 139–140 coordinates spermidine; sequence EE. A spermidine-binding site is contributed by aspartate 262. Residue glycine 304 coordinates NAD(+). Histidine 309 serves as a coordination point for spermidine. Position 329-330 (329-330) interacts with NAD(+); the sequence is TG. Spermidine-binding positions include 335-337 and 344-350; these read GSD and EAVSWGK. Residue lysine 350 is the Nucleophile of the active site. 363–364 lines the NAD(+) pocket; that stretch reads DA.

Belongs to the deoxyhypusine synthase family. It depends on NAD(+) as a cofactor.

The enzyme catalyses [eIF5A protein]-L-lysine + spermidine = [eIF5A protein]-deoxyhypusine + propane-1,3-diamine. It functions in the pathway protein modification; eIF5A hypusination. Catalyzes the NAD-dependent oxidative cleavage of spermidine and the subsequent transfer of the butylamine moiety of spermidine to the epsilon-amino group of a specific lysine residue of the eIF-5A precursor protein to form the intermediate deoxyhypusine residue. This Kluyveromyces lactis (strain ATCC 8585 / CBS 2359 / DSM 70799 / NBRC 1267 / NRRL Y-1140 / WM37) (Yeast) protein is Deoxyhypusine synthase (DYS1).